The chain runs to 375 residues: Response regulator aspartate phosphatase E (375 aa).

Positions 24–95 form a coiled coil; it reads NVTDAEMLKA…HKKKLDNMRA (72 aa). 6 TPR repeats span residues 96–129, 177–210, 219–252, 258–291, 297–330, and 333–366; these read YYYNFFRGMYEFRNGEYTRAITYYKKAERKIPTI, IQCHFVIAGNYDDLENHEKALPHLQEALKGAELL, ATAFFNLGNCYHKMDNLNKAARYIEQALVQYRKI, PQAYHDLALIYFKQGKKEQAMDCFRKGIRSAVDF, MNLFEALDVLYIRNGDTPKLLNIFSRLENGKGYP, and EELALLGGNLFDYNGKIEDSIICFKKMVYAQKQI.

It belongs to the Rap family.

It is found in the cytoplasm. Phosphatase activity is inhibited by the phosphatase regulator PhrE. In terms of biological role, involved in the regulation of sporulation. Acts as a phosphatase that specifically dephosphorylates the sporulation initiation phosphotransferase Spo0F and inhibits its activity. Probably plays a dispensable role in the overall context of sporulation initiation. The chain is Response regulator aspartate phosphatase E (rapE) from Bacillus subtilis (strain 168).